We begin with the raw amino-acid sequence, 468 residues long: UDP-N-acetylmuramate--L-alanine ligase (468 aa).

107-113 contributes to the ATP binding site; it reads GTHGKTT.

The protein belongs to the MurCDEF family.

It localises to the cytoplasm. The enzyme catalyses UDP-N-acetyl-alpha-D-muramate + L-alanine + ATP = UDP-N-acetyl-alpha-D-muramoyl-L-alanine + ADP + phosphate + H(+). The protein operates within cell wall biogenesis; peptidoglycan biosynthesis. Its function is as follows. Cell wall formation. The sequence is that of UDP-N-acetylmuramate--L-alanine ligase from Roseiflexus sp. (strain RS-1).